The primary structure comprises 223 residues: MLWVQRKRRRKETSECPSDKDKSPESHKAKNESWIKSHFSRLSEEKLALDNNASASGNATQTESGSEEVSSTVHIETFTTRHGEVGSALHRESFTSRQKTSGPSVIQEIHQESGKAPSTDEATWAAVAACTKEIDTQGRHLAHSMLQRAIAYQHSGHLESKDINQEELRALEEVEMKLQKNFLTQRENTIAGANHTHTFYGHSHHSHHGHPSHQSHSLPNRRH.

Over residues 1 to 11 (MLWVQRKRRRK) the composition is skewed to basic residues. The segment at 1 to 37 (MLWVQRKRRRKETSECPSDKDKSPESHKAKNESWIKS) is disordered. A compositionally biased stretch (basic and acidic residues) spans 12–37 (ETSECPSDKDKSPESHKAKNESWIKS). Ser43 carries the phosphoserine modification. Disordered regions lie at residues 49-73 (LDNN…SSTV) and 196-223 (THTF…NRRH). A compositionally biased stretch (polar residues) spans 51–61 (NNASASGNATQ). Residues 62–73 (TESGSEEVSSTV) show a composition bias toward low complexity. The span at 202 to 223 (HSHHSHHGHPSHQSHSLPNRRH) shows a compositional bias: basic residues.

This is an uncharacterized protein from Homo sapiens (Human).